The sequence spans 395 residues: Phosphopentomutase (395 aa).

Asp14, Asp286, His291, Asp327, His328, and His339 together coordinate Mn(2+).

The protein belongs to the phosphopentomutase family. Mn(2+) is required as a cofactor.

Its subcellular location is the cytoplasm. The catalysed reaction is 2-deoxy-alpha-D-ribose 1-phosphate = 2-deoxy-D-ribose 5-phosphate. The enzyme catalyses alpha-D-ribose 1-phosphate = D-ribose 5-phosphate. It participates in carbohydrate degradation; 2-deoxy-D-ribose 1-phosphate degradation; D-glyceraldehyde 3-phosphate and acetaldehyde from 2-deoxy-alpha-D-ribose 1-phosphate: step 1/2. Its function is as follows. Isomerase that catalyzes the conversion of deoxy-ribose 1-phosphate (dRib-1-P) and ribose 1-phosphate (Rib-1-P) to deoxy-ribose 5-phosphate (dRib-5-P) and ribose 5-phosphate (Rib-5-P), respectively. The chain is Phosphopentomutase from Staphylococcus saprophyticus subsp. saprophyticus (strain ATCC 15305 / DSM 20229 / NCIMB 8711 / NCTC 7292 / S-41).